Consider the following 175-residue polypeptide: Cyclic pyranopterin monophosphate synthase (175 aa).

Substrate-binding positions include Leu-78–His-80 and Met-125–Glu-126. Asp-140 is an active-site residue.

Belongs to the MoaC family. As to quaternary structure, homohexamer; trimer of dimers.

It carries out the reaction (8S)-3',8-cyclo-7,8-dihydroguanosine 5'-triphosphate = cyclic pyranopterin phosphate + diphosphate. The protein operates within cofactor biosynthesis; molybdopterin biosynthesis. Functionally, catalyzes the conversion of (8S)-3',8-cyclo-7,8-dihydroguanosine 5'-triphosphate to cyclic pyranopterin monophosphate (cPMP). The chain is Cyclic pyranopterin monophosphate synthase from Rhodopirellula baltica (strain DSM 10527 / NCIMB 13988 / SH1).